A 98-amino-acid chain; its full sequence is Small ribosomal subunit protein uS19 (98 aa).

It belongs to the universal ribosomal protein uS19 family.

In terms of biological role, protein S19 forms a complex with S13 that binds strongly to the 16S ribosomal RNA. The polypeptide is Small ribosomal subunit protein uS19 (Chlorobaculum parvum (strain DSM 263 / NCIMB 8327) (Chlorobium vibrioforme subsp. thiosulfatophilum)).